The primary structure comprises 374 residues: S-adenosylmethionine:tRNA ribosyltransferase-isomerase (374 aa).

Belongs to the QueA family. As to quaternary structure, monomer.

It localises to the cytoplasm. It catalyses the reaction 7-aminomethyl-7-carbaguanosine(34) in tRNA + S-adenosyl-L-methionine = epoxyqueuosine(34) in tRNA + adenine + L-methionine + 2 H(+). The protein operates within tRNA modification; tRNA-queuosine biosynthesis. Transfers and isomerizes the ribose moiety from AdoMet to the 7-aminomethyl group of 7-deazaguanine (preQ1-tRNA) to give epoxyqueuosine (oQ-tRNA). The chain is S-adenosylmethionine:tRNA ribosyltransferase-isomerase from Sorangium cellulosum (strain So ce56) (Polyangium cellulosum (strain So ce56)).